The chain runs to 611 residues: Glutathione hydrolase proenzyme 2 (611 aa).

Over 1 to 42 the chain is Cytoplasmic; the sequence is MSPTDTTPLLYSWDDQSRHQDPDWHKLRNYHGAWYRRISRRR. Residues 43 to 63 form a helical; Signal-anchor for type II membrane protein membrane-spanning segment; the sequence is FSQFIFAFGLMTLFVLVYSIS. The Lumenal segment spans residues 64–611; it reads SNLHTPTQFT…PRKYGQAAAY (548 aa). Asn-138 carries N-linked (GlcNAc...) asparagine glycosylation. Arg-147 is an L-glutamate binding site. N-linked (GlcNAc...) asparagine glycosylation is found at Asn-153, Asn-297, and Asn-396. Thr-420 (nucleophile) is an active-site residue. Residues Thr-438, Asn-440, Gln-459, Asp-462, 490–491, and 512–513 contribute to the L-glutamate site; these read SS and GG.

It belongs to the gamma-glutamyltransferase family. In terms of assembly, heterodimer composed of the light and heavy chains. The active site is located in the light chain. In terms of processing, cleaved by autocatalysis into a large and a small subunit.

It is found in the vacuole membrane. The enzyme catalyses an N-terminal (5-L-glutamyl)-[peptide] + an alpha-amino acid = 5-L-glutamyl amino acid + an N-terminal L-alpha-aminoacyl-[peptide]. It catalyses the reaction glutathione + H2O = L-cysteinylglycine + L-glutamate. It carries out the reaction an S-substituted glutathione + H2O = an S-substituted L-cysteinylglycine + L-glutamate. The protein operates within sulfur metabolism; glutathione metabolism. In terms of biological role, catalyzes the transfer of the gamma-glutamyl moiety of glutathione (GSH) and other gamma-glutamyl compounds to amino acids and peptides. Major GSH-degrading enzyme, catalyzing the hydrolytic release of L-glutamate from GSH. Plays a role in the turnover of the vacuolar GSH, serving as an alternative nitrogen source during nitrogen starvation. The sequence is that of Glutathione hydrolase proenzyme 2 (ggt2) from Schizosaccharomyces pombe (strain 972 / ATCC 24843) (Fission yeast).